A 261-amino-acid chain; its full sequence is Pimeloyl-[acyl-carrier protein] methyl ester esterase (261 aa).

The AB hydrolase-1 domain occupies 16-241; the sequence is LVLIHGWGMN…QASHAPFISH (226 aa). Substrate is bound by residues tryptophan 22, 82–83, and 143–147; these read SL and FMTLQ. Residue serine 82 is the Nucleophile of the active site. Residues aspartate 207 and histidine 235 contribute to the active site. Histidine 235 contributes to the substrate binding site.

Belongs to the AB hydrolase superfamily. Carboxylesterase BioH family. Monomer.

The protein resides in the cytoplasm. The enzyme catalyses 6-carboxyhexanoyl-[ACP] methyl ester + H2O = 6-carboxyhexanoyl-[ACP] + methanol + H(+). The protein operates within cofactor biosynthesis; biotin biosynthesis. The physiological role of BioH is to remove the methyl group introduced by BioC when the pimeloyl moiety is complete. It allows to synthesize pimeloyl-ACP via the fatty acid synthetic pathway through the hydrolysis of the ester bonds of pimeloyl-ACP esters. This Aliivibrio salmonicida (strain LFI1238) (Vibrio salmonicida (strain LFI1238)) protein is Pimeloyl-[acyl-carrier protein] methyl ester esterase.